A 330-amino-acid polypeptide reads, in one-letter code: G-protein coupled receptor 157 (330 aa).

The Extracellular portion of the chain corresponds to 1 to 15 (MPSPAPPTELLPWER). The helical transmembrane segment at 16 to 36 (AVVLLSCALSALGSGLLVATH) threads the bilayer. At 37–48 (ALWPDLRSRARR) the chain is on the cytoplasmic side. The chain crosses the membrane as a helical span at residues 49 to 69 (LLLFLSLADLLSAASYFYGVL). At 70-87 (QDFAGTSWDCVLQGALST) the chain is on the extracellular side. The chain crosses the membrane as a helical span at residues 88-108 (FANTSSFFWTVAIALYLYLSI). Over 109–119 (VRTTRGPSTDH) the chain is Cytoplasmic. The chain crosses the membrane as a helical span at residues 120-140 (LIWAFHLISWGVPLAITVAAV). Topologically, residues 141–166 (SLKKIGYDASDVSVGWCWINLEAEDR) are extracellular. Residues 167 to 187 (VLWMLLTGKLWEMLAYILLPL) traverse the membrane as a helical segment. Residues 188–227 (LYLLVRKHINRAHQALSEYRPICEGRQLQRGSSTSTADKK) lie on the Cytoplasmic side of the membrane. A helical membrane pass occupies residues 228-248 (LVLIPLIFICLRVWSTVRFVL). At 249–259 (TLCGSPAVQTP) the chain is on the extracellular side. A helical membrane pass occupies residues 260–280 (VLVVLHGIGNTFQGGANCIMF). Residues 281–330 (VLCTRAVRTRLFSLCCCCPRPSTQSPPGAPTPPKIGESQESRRTPEVPST) lie on the Cytoplasmic side of the membrane. The disordered stretch occupies residues 301-330 (PSTQSPPGAPTPPKIGESQESRRTPEVPST). Residues 317 to 330 (ESQESRRTPEVPST) are compositionally biased toward basic and acidic residues.

Belongs to the G-protein coupled receptor 2 family. Expressed in the primary cilia of radial glial progenitors (RGPs) in the developing neocortex.

Its subcellular location is the cell projection. It is found in the cilium membrane. Orphan receptor that promotes neuronal differentiation of radial glial progenitors (RGPs). The activity of this receptor is mediated by a G(q)-protein that activates a phosphatidylinositol-calcium second messenger. The chain is G-protein coupled receptor 157 (Gpr157) from Mus musculus (Mouse).